The chain runs to 81 residues: Acyl carrier protein (81 aa).

A Carrier domain is found at 4–79 (DEVYSRVRKI…DAVNYILSKK (76 aa)). Residue Ser-39 is modified to O-(pantetheine 4'-phosphoryl)serine.

Belongs to the acyl carrier protein (ACP) family. In terms of processing, 4'-phosphopantetheine is transferred from CoA to a specific serine of apo-ACP by AcpS. This modification is essential for activity because fatty acids are bound in thioester linkage to the sulfhydryl of the prosthetic group.

It is found in the cytoplasm. It functions in the pathway lipid metabolism; fatty acid biosynthesis. In terms of biological role, carrier of the growing fatty acid chain in fatty acid biosynthesis. In Synechococcus sp. (strain JA-3-3Ab) (Cyanobacteria bacterium Yellowstone A-Prime), this protein is Acyl carrier protein.